The primary structure comprises 428 residues: Protein CANDIDATE G-PROTEIN COUPLED RECEPTOR 6 (428 aa).

The N-terminal stretch at 1 to 22 is a signal peptide; sequence MTILPFLAAVFVLQLLSTLTVA. 3 N-linked (GlcNAc...) asparagine glycosylation sites follow: asparagine 31, asparagine 89, and asparagine 157. Transmembrane regions (helical) follow at residues 173 to 193, 202 to 222, 238 to 258, 276 to 296, 310 to 330, 356 to 376, and 385 to 405; these read LYLV…CFCW, IHLL…CAAV, IVFY…IVLI, LLVI…VIGE, IFFL…VWSM, FYVL…VMKM, and VSNA…FYMF.

This sequence belongs to the LU7TM family.

It localises to the membrane. Functionally, G-protein coupled receptor. Plays a role in plants and microbes interactions. This is Protein CANDIDATE G-PROTEIN COUPLED RECEPTOR 6 from Arabidopsis thaliana (Mouse-ear cress).